A 494-amino-acid chain; its full sequence is Monocarboxylate transporter 1 (494 aa).

Topologically, residues 1–22 (MPPAIGGPVGYTPPDGGWGWAV) are cytoplasmic. Residues 23 to 44 (VVGAFISIGFSYAFPKSITVFF) form a helical membrane-spanning segment. (S)-lactate is bound at residue lysine 38. At 45–55 (KEIEIIFSATT) the chain is on the extracellular side. Residues 56 to 80 (SEVSWISSIMLAVMYAGGPISSILV) traverse the membrane as a helical segment. Topologically, residues 81–84 (NKYG) are cytoplasmic. A helical transmembrane segment spans residues 85–105 (SRPVMIAGGCLSGCGLIAASF). The Extracellular segment spans residues 106 to 109 (CNTV). A helical membrane pass occupies residues 110 to 132 (QELYFCIGVIGGLGLAFNLNPAL). Topologically, residues 133-146 (TMIGKYFYKKRPLA) are cytoplasmic. Residues 147–169 (NGLAMAGSPVFLSTLAPLNQAFF) traverse the membrane as a helical segment. At 170–174 (GIFGW) the chain is on the extracellular side. A helical membrane pass occupies residues 175–194 (RGSFLILGGLLLNCCVAGSL). The Cytoplasmic segment spans residues 195–254 (MRPIGPQQGKVEKLKSKESLQEAGKSDANTDLIGGSPKGEKLSVFQTVNKFLDLSLFTHR). A phosphoserine mark is found at serine 210, serine 213, and serine 220. Threonine 224 is subject to Phosphothreonine. Serine 230 carries the post-translational modification Phosphoserine. A helical membrane pass occupies residues 255-281 (GFLLYLSGNVVMFFGLFTPLVFLSNYG). At 282–288 (KSKHFSS) the chain is on the extracellular side. Residues 289–310 (EKSAFLLSILAFVDMVARPSMG) form a helical membrane-spanning segment. Aspartate 302 is a binding site for H(+). Arginine 306 lines the (S)-lactate pocket. Over 311–321 (LAANTRWIRPR) the chain is Cytoplasmic. The chain crosses the membrane as a helical span at residues 322–342 (VQYFFAASVVANGVCHLLAPL). At 343-346 (STTY) the chain is on the extracellular side. Residues 347 to 368 (VGFCIYAGVFGFAFGWLSSVLF) form a helical membrane-spanning segment. Residues 369–382 (ETLMDLVGPQRFSS) lie on the Cytoplasmic side of the membrane. A helical membrane pass occupies residues 383–403 (AVGLVTIVECCPVLLGPPLLG). Over 404-414 (RLNDMYGDYKY) the chain is Extracellular. Residues 415–436 (TYWACGVILIIAGLYLFIGMGI) traverse the membrane as a helical segment. The Cytoplasmic segment spans residues 437–494 (NYRLVAKEQKAEEKKRDGKEDETSTDVDEKPKKTMKETQSPAPLQNSSGDPAEEESPV). Positions 446 to 472 (KAEEKKRDGKEDETSTDVDEKPKKTMK) are enriched in basic and acidic residues. Positions 446-494 (KAEEKKRDGKEDETSTDVDEKPKKTMKETQSPAPLQNSSGDPAEEESPV) are disordered. Phosphothreonine is present on threonine 459. A Phosphoserine modification is found at serine 460. A Phosphothreonine modification is found at threonine 461. Over residues 473–485 (ETQSPAPLQNSSG) the composition is skewed to polar residues. Serine 476, serine 483, serine 484, and serine 492 each carry phosphoserine.

This sequence belongs to the major facilitator superfamily. Monocarboxylate porter (TC 2.A.1.13) family. Interacts with BSG. Interacts with EMB. Interaction with either BSG or EMB is required for expression at the cell membrane. Detected in erythrocytes (at protein level). Detected in brain, heart, kidney, lung, muscle, jejunum enterocytes and brain capillaries.

The protein localises to the cell membrane. It localises to the basolateral cell membrane. Its subcellular location is the apical cell membrane. It carries out the reaction (S)-lactate(in) + H(+)(in) = (S)-lactate(out) + H(+)(out). It catalyses the reaction pyruvate(out) + H(+)(out) = pyruvate(in) + H(+)(in). The enzyme catalyses acetoacetate(out) + H(+)(out) = acetoacetate(in) + H(+)(in). The catalysed reaction is (S)-3-hydroxybutanoate(out) + H(+)(out) = (S)-3-hydroxybutanoate(in) + H(+)(in). It carries out the reaction (R)-3-hydroxybutanoate(out) + H(+)(out) = (R)-3-hydroxybutanoate(in) + H(+)(in). It catalyses the reaction 3-methyl-2-oxobutanoate(out) + H(+)(out) = 3-methyl-2-oxobutanoate(in) + H(+)(in). The enzyme catalyses 4-methyl-2-oxopentanoate(out) + H(+)(out) = 4-methyl-2-oxopentanoate(in) + H(+)(in). With respect to regulation, inhibited by stilbene disulfonates, such as di-isothiocyanostilbene disulfonate(DIDS), a cross-linking reagent that forms covalent linkages with lysine groups. In terms of biological role, bidirectional proton-coupled monocarboxylate transporter. Catalyzes the rapid transport across the plasma membrane of many monocarboxylates such as lactate, pyruvate, acetate and the ketone bodies acetoacetate and beta-hydroxybutyrate, and thus contributes to the maintenance of intracellular pH. The transport direction is determined by the proton motive force and the concentration gradient of the substrate monocarboxylate. MCT1 is a major lactate exporter. Plays a role in cellular responses to a high-fat diet by modulating the cellular levels of lactate and pyruvate that contribute to the regulation of central metabolic pathways and insulin secretion, with concomitant effects on plasma insulin levels and blood glucose homeostasis. Facilitates the protonated monocarboxylate form of succinate export, that its transient protonation upon muscle cell acidification in exercising muscle and ischemic heart. Functions via alternate outward- and inward-open conformation states. Protonation and deprotonation of 302-Asp is essential for the conformational transition. The sequence is that of Monocarboxylate transporter 1 (Slc16a1) from Rattus norvegicus (Rat).